We begin with the raw amino-acid sequence, 33 residues long: Cytochrome b6-f complex subunit 7 (33 aa).

Residues 9–29 (AVICFTLTLIGLSLGFVLLKI) form a helical membrane-spanning segment.

The protein belongs to the PetM family. In terms of assembly, the 4 large subunits of the cytochrome b6-f complex are cytochrome b6, subunit IV (17 kDa polypeptide, PetD), cytochrome f and the Rieske protein, while the 4 small subunits are PetG, PetL, PetM and PetN. The complex functions as a dimer.

The protein resides in the plastid. The protein localises to the cyanelle thylakoid membrane. In terms of biological role, component of the cytochrome b6-f complex, which mediates electron transfer between photosystem II (PSII) and photosystem I (PSI), cyclic electron flow around PSI, and state transitions. The protein is Cytochrome b6-f complex subunit 7 of Cyanophora paradoxa.